Consider the following 350-residue polypeptide: Pleckstrin (350 aa).

A PH 1 domain is found at 4-101; it reads KRIREGYLVK…WVRDIKKAIK (98 aa). An N6-acetyllysine modification is found at Lys64. Phosphoserine is present on residues Ser113 and Ser117. Positions 136-221 constitute a DEP domain; that stretch reads PEKGIKELNL…SPDAFYYFPD (86 aa). The 104-residue stretch at 244 to 347 folds into the PH 2 domain; the sequence is VIIKQGCLLK…WIKAIQVASR (104 aa).

Major protein kinase C substrate of platelets. The chain is Pleckstrin (Plek) from Mus musculus (Mouse).